The following is a 181-amino-acid chain: Large ribosomal subunit protein uL5 (181 aa).

It belongs to the universal ribosomal protein uL5 family. In terms of assembly, part of the 50S ribosomal subunit; contacts the 5S rRNA and probably tRNA. Forms a bridge to the 30S subunit in the 70S ribosome.

Its function is as follows. This is one of the proteins that bind and probably mediate the attachment of the 5S RNA into the large ribosomal subunit, where it forms part of the central protuberance. In the 70S ribosome it contacts protein S13 of the 30S subunit (bridge B1b), connecting the 2 subunits; this bridge is implicated in subunit movement. May contact the P site tRNA; the 5S rRNA and some of its associated proteins might help stabilize positioning of ribosome-bound tRNAs. The protein is Large ribosomal subunit protein uL5 of Methanococcus maripaludis (strain C5 / ATCC BAA-1333).